Here is an 81-residue protein sequence, read N- to C-terminus: MLVAYICHVKRLQIYIDEDVDRALAVEARRRRTSKAALIREYVAEHLRQPGPDPVDAFVGSFVGEADLSASVDDVVYGKHE.

Its function is as follows. Antitoxin component of a type II toxin-antitoxin (TA) system. Neutralizes the toxic effect of cognate toxin VapC20. This chain is Antitoxin VapB20 (vapB20), found in Mycobacterium tuberculosis (strain CDC 1551 / Oshkosh).